The primary structure comprises 304 residues: Probable WRKY transcription factor 29 (304 aa).

2 disordered regions span residues 76-96 (LPED…GCLL) and 185-236 (YTNE…IPSA). Over residues 78–88 (EDSKPFRDDKK) the composition is skewed to basic and acidic residues. Residues 128–194 (KEENLLSDAW…YTNEHNHELP (67 aa)) constitute a DNA-binding region (WRKY). 2 stretches are compositionally biased toward polar residues: residues 196-213 (RRNS…QPKP) and 225-236 (SSPTSNPMIPSA).

This sequence belongs to the WRKY group II-e family.

Its subcellular location is the nucleus. Transcription factor involved in the expression of defense genes in innate immune response of plants. Interacts specifically with the W box (5'-(T)TGAC[CT]-3'), a frequently occurring elicitor-responsive cis-acting element. Activates WRKY 22, SIRK and its own promoters. This is Probable WRKY transcription factor 29 (WRKY29) from Arabidopsis thaliana (Mouse-ear cress).